Reading from the N-terminus, the 326-residue chain is Thiamine thiazole synthase (326 aa).

Residues cysteine 87, 108–109, glycine 116, and valine 181 each bind substrate; that span reads EA. Cysteine 215 bears the 2,3-didehydroalanine (Cys) mark. Residues aspartate 217, histidine 232, methionine 284, and 294 to 296 contribute to the substrate site; that span reads RMG.

It belongs to the THI4 family. As to quaternary structure, homooctamer. Fe cation is required as a cofactor. In terms of processing, during the catalytic reaction, a sulfide is transferred from Cys-215 to a reaction intermediate, generating a dehydroalanine residue.

The protein localises to the cytoplasm. It is found in the nucleus. It catalyses the reaction [ADP-thiazole synthase]-L-cysteine + glycine + NAD(+) = [ADP-thiazole synthase]-dehydroalanine + ADP-5-ethyl-4-methylthiazole-2-carboxylate + nicotinamide + 3 H2O + 2 H(+). Functionally, involved in biosynthesis of the thiamine precursor thiazole. Catalyzes the conversion of NAD and glycine to adenosine diphosphate 5-(2-hydroxyethyl)-4-methylthiazole-2-carboxylic acid (ADT), an adenylated thiazole intermediate. The reaction includes an iron-dependent sulfide transfer from a conserved cysteine residue of the protein to a thiazole intermediate. The enzyme can only undergo a single turnover, which suggests it is a suicide enzyme. May have additional roles in adaptation to various stress conditions and in DNA damage tolerance. The sequence is that of Thiamine thiazole synthase from Sclerotinia sclerotiorum (strain ATCC 18683 / 1980 / Ss-1) (White mold).